The sequence spans 278 residues: Small ribosomal subunit protein uS2 (278 aa).

S2 is modified (N-acetylserine). A disordered region spans residues 258–278 (TNEGKTAADEWATGAQTQSNW).

Belongs to the universal ribosomal protein uS2 family. Component of the small ribosomal subunit. Mature ribosomes consist of a small (40S) and a large (60S) subunit. The 40S subunit contains about 33 different proteins and 1 molecule of RNA (18S). The 60S subunit contains about 49 different proteins and 3 molecules of RNA (28S, 5.8S and 5S). Interacts with rps-21.

Its subcellular location is the cytoplasm. In terms of biological role, required for the assembly and/or stability of the 40S ribosomal subunit. Required for the processing of the 20S rRNA-precursor to mature 18S rRNA in a late step of the maturation of 40S ribosomal subunits. This chain is Small ribosomal subunit protein uS2, found in Caenorhabditis briggsae.